The primary structure comprises 218 residues: Large ribosomal subunit protein eL14 (218 aa).

At lysine 79 the chain carries N6-acetyllysine. Lysine 85 is subject to N6-acetyllysine; alternate. Residue lysine 85 is modified to N6-succinyllysine; alternate. A Glycyl lysine isopeptide (Lys-Gly) (interchain with G-Cter in SUMO2) cross-link involves residue lysine 124. Position 139 is a phosphoserine (serine 139). The segment at 159 to 218 (VPAKKATAAGKKAAAQKAPAQKAPAQKAAGQKAAQPPKAQKGQKPPAQKAPAPKASGKKA) is disordered. 6 tandem repeats follow at residues 174 to 178 (QKAPA), 179 to 183 (QKAPA), 184 to 188 (QKAAG), 189 to 193 (QKAAQ), 196 to 198 (KAQ), and 199 to 201 (KGQ). Residues 174 to 193 (QKAPAQKAPAQKAAGQKAAQ) are 4 X 5 AA tandem repeats of Q-K-A-[PAS]-X. The 2 X 3 AA tandem repeats of K-[GA]-Q stretch occupies residues 196 to 201 (KAQKGQ). Residue lysine 207 is modified to N6-succinyllysine.

This sequence belongs to the eukaryotic ribosomal protein eL14 family. In terms of assembly, component of the large ribosomal subunit.

The protein localises to the cytoplasm. Its function is as follows. Component of the large ribosomal subunit. The ribosome is a large ribonucleoprotein complex responsible for the synthesis of proteins in the cell. The polypeptide is Large ribosomal subunit protein eL14 (RPL14) (Oryctolagus cuniculus (Rabbit)).